Here is a 469-residue protein sequence, read N- to C-terminus: Ribulose bisphosphate carboxylase large chain (469 aa).

Positions 1–2 (MS) are excised as a propeptide. Pro3 carries the N-acetylproline modification. Lys14 is subject to N6,N6,N6-trimethyllysine. Positions 123 and 173 each coordinate substrate. Catalysis depends on Lys175, which acts as the Proton acceptor. Substrate is bound at residue Lys177. Residues Lys201, Asp203, and Glu204 each coordinate Mg(2+). Lys201 carries the post-translational modification N6-carboxylysine. The Proton acceptor role is filled by His294. Arg295, His327, and Ser379 together coordinate substrate.

It belongs to the RuBisCO large chain family. Type I subfamily. In terms of assembly, heterohexadecamer of 8 large chains and 8 small chains; disulfide-linked. The disulfide link is formed within the large subunit homodimers. Mg(2+) serves as cofactor. Post-translationally, the disulfide bond which can form in the large chain dimeric partners within the hexadecamer appears to be associated with oxidative stress and protein turnover.

It is found in the plastid. The protein localises to the chloroplast. It carries out the reaction 2 (2R)-3-phosphoglycerate + 2 H(+) = D-ribulose 1,5-bisphosphate + CO2 + H2O. The enzyme catalyses D-ribulose 1,5-bisphosphate + O2 = 2-phosphoglycolate + (2R)-3-phosphoglycerate + 2 H(+). Functionally, ruBisCO catalyzes two reactions: the carboxylation of D-ribulose 1,5-bisphosphate, the primary event in carbon dioxide fixation, as well as the oxidative fragmentation of the pentose substrate in the photorespiration process. Both reactions occur simultaneously and in competition at the same active site. This Iris ensata (Japanese iris) protein is Ribulose bisphosphate carboxylase large chain.